A 535-amino-acid polypeptide reads, in one-letter code: CTP synthase (535 aa).

An amidoligase domain region spans residues Met-1–Ile-266. Ser-14 provides a ligand contact to CTP. Ser-14 contributes to the UTP binding site. Residues Ser-15–Leu-20 and Asp-72 each bind ATP. Residues Asp-72 and Glu-140 each coordinate Mg(2+). CTP-binding positions include Asp-147–Glu-149, Lys-187–Gln-192, and Lys-223. UTP is bound by residues Lys-187–Gln-192 and Lys-223. The Glutamine amidotransferase type-1 domain maps to Arg-292–Gln-534. Gly-354 contributes to the L-glutamine binding site. Catalysis depends on Cys-381, which acts as the Nucleophile; for glutamine hydrolysis. L-glutamine is bound by residues Leu-382–Gln-385, Glu-405, and Arg-462. Residues His-507 and Glu-509 contribute to the active site.

It belongs to the CTP synthase family. As to quaternary structure, homotetramer.

It carries out the reaction UTP + L-glutamine + ATP + H2O = CTP + L-glutamate + ADP + phosphate + 2 H(+). It catalyses the reaction L-glutamine + H2O = L-glutamate + NH4(+). The enzyme catalyses UTP + NH4(+) + ATP = CTP + ADP + phosphate + 2 H(+). It functions in the pathway pyrimidine metabolism; CTP biosynthesis via de novo pathway; CTP from UDP: step 2/2. With respect to regulation, allosterically activated by GTP, when glutamine is the substrate; GTP has no effect on the reaction when ammonia is the substrate. The allosteric effector GTP functions by stabilizing the protein conformation that binds the tetrahedral intermediate(s) formed during glutamine hydrolysis. Inhibited by the product CTP, via allosteric rather than competitive inhibition. Catalyzes the ATP-dependent amination of UTP to CTP with either L-glutamine or ammonia as the source of nitrogen. Regulates intracellular CTP levels through interactions with the four ribonucleotide triphosphates. The chain is CTP synthase from Trichlorobacter lovleyi (strain ATCC BAA-1151 / DSM 17278 / SZ) (Geobacter lovleyi).